The chain runs to 706 residues: Gamma-adducin (706 aa).

The segment covering 1-10 (MSSDASQGVI) has biased composition (polar residues). The tract at residues 1 to 20 (MSSDASQGVITTPPPPSMPH) is disordered. N-acetylserine is present on Ser-2. Phosphoserine is present on residues Ser-42, Ser-64, Ser-402, Ser-414, Ser-423, Ser-442, and Ser-461. Disordered stretches follow at residues 471 to 497 (AEDS…LNTN), 535 to 555 (PSTM…NPFS), 575 to 610 (GLED…KLEE), and 666 to 706 (EKIE…KVEA). Lys-484 participates in a covalent cross-link: Glycyl lysine isopeptide (Lys-Gly) (interchain with G-Cter in SUMO2). 7 positions are modified to phosphoserine: Ser-585, Ser-590, Ser-673, Ser-677, Ser-679, Ser-681, and Ser-683. A compositionally biased stretch (low complexity) spans 589-602 (SSVSQIQSQTQSPQ). The segment covering 682-706 (PSKKKKKFRTPSFLKKNKKKEKVEA) has biased composition (basic residues). The interaction with calmodulin stretch occupies residues 684–701 (KKKKKFRTPSFLKKNKKK).

Belongs to the aldolase class II family. Adducin subfamily. As to quaternary structure, heterodimer of an alpha and a gamma subunit. Post-translationally, sumoylated. In terms of processing, proteolytically cleaved by asparagine endopeptidase (AEP) into 2 fragments. Overexpression of the 1-357 fragment induces neuronal apoptosis, and overexpression of either 1-357 or 358-706 fragment increases the degeneration of dendritic spines. Overexpression of the 1-357 fragment impairs neurite outgrowth by downregulating the expression of Rac2, and induces synaptic dysfunction and cognitive impairments in tau P301S transgenic mice, a mouse model for Alzheimer disease (AD). In terms of tissue distribution, ubiquitously expressed. As to expression, cleavage fragment 1-357 is abundantly expressed in the brain of patients with Alzheimer disease (AD), but hardly detectable in age-matched control individuals (at protein level).

The protein resides in the cytoplasm. It localises to the cytoskeleton. It is found in the cell membrane. In terms of biological role, membrane-cytoskeleton-associated protein that promotes the assembly of the spectrin-actin network. Plays a role in actin filament capping. Binds to calmodulin. Involved in myogenic reactivity of the renal afferent arteriole (Af-art), renal interlobular arteries and middle cerebral artery (MCA) to increased perfusion pressure. Involved in regulation of potassium channels in the vascular smooth muscle cells (VSMCs) of the Af-art and MCA ex vivo. Involved in regulation of glomerular capillary pressure, glomerular filtration rate (GFR) and glomerular nephrin expression in response to hypertension. Involved in renal blood flow (RBF) autoregulation. Plays a role in podocyte structure and function. Regulates globular monomer actin (G-actin) and filamentous polymer actin (F-actin) ratios in the primary podocytes affecting actin cytoskeleton organization. Regulates expression of synaptopodin, RhoA, Rac1 and CDC42 in the renal cortex and the primary podocytes. Regulates expression of nephrin in the glomeruli and in the primary podocytes, expression of nephrin and podocinin in the renal cortex, and expression of focal adhesion proteins integrin alpha-3 and integrin beta-1 in the glomeruli. Involved in cell migration and cell adhesion of podocytes, and in podocyte foot process effacement. Regulates expression of profibrotics markers MMP2, MMP9, TGF beta-1, tubular tight junction protein E-cadherin, and mesenchymal markers vimentin and alpha-SMA. Promotes the growth of neurites. This is Gamma-adducin (ADD3) from Homo sapiens (Human).